A 451-amino-acid polypeptide reads, in one-letter code: SH2 domain-containing protein 7 (451 aa).

One can recognise an SH2 domain in the interval 51-142 (WFHGFITRKQ…PFKEMLTAAC (92 aa)). Disordered regions lie at residues 180–232 (KAAS…SLLE), 256–321 (LGTE…SDAM), and 408–436 (GTPE…THKP). Residues 221-232 (SPLPEKSSSLLE) are compositionally biased toward low complexity. The segment covering 279-291 (EAQRRLSDGEQNR) has biased composition (basic and acidic residues). Polar residues predominate over residues 306–316 (QGPTESPTSWG). Positions 426-436 (KSKETGRTHKP) are enriched in basic and acidic residues.

The sequence is that of SH2 domain-containing protein 7 (SH2D7) from Homo sapiens (Human).